We begin with the raw amino-acid sequence, 421 residues long: Serine hydroxymethyltransferase (421 aa).

(6S)-5,6,7,8-tetrahydrofolate-binding positions include Leu121 and 125–127; that span reads GHL. Position 229 is an N6-(pyridoxal phosphate)lysine (Lys229).

The protein belongs to the SHMT family. Homodimer. It depends on pyridoxal 5'-phosphate as a cofactor.

It is found in the cytoplasm. The enzyme catalyses (6R)-5,10-methylene-5,6,7,8-tetrahydrofolate + glycine + H2O = (6S)-5,6,7,8-tetrahydrofolate + L-serine. Its pathway is one-carbon metabolism; tetrahydrofolate interconversion. The protein operates within amino-acid biosynthesis; glycine biosynthesis; glycine from L-serine: step 1/1. Catalyzes the reversible interconversion of serine and glycine with tetrahydrofolate (THF) serving as the one-carbon carrier. This reaction serves as the major source of one-carbon groups required for the biosynthesis of purines, thymidylate, methionine, and other important biomolecules. Also exhibits THF-independent aldolase activity toward beta-hydroxyamino acids, producing glycine and aldehydes, via a retro-aldol mechanism. In Haemophilus influenzae (strain PittGG), this protein is Serine hydroxymethyltransferase.